The primary structure comprises 239 residues: Probable transcriptional regulatory protein ABO_1803 (239 aa).

This sequence belongs to the TACO1 family.

It is found in the cytoplasm. The chain is Probable transcriptional regulatory protein ABO_1803 from Alcanivorax borkumensis (strain ATCC 700651 / DSM 11573 / NCIMB 13689 / SK2).